We begin with the raw amino-acid sequence, 62 residues long: Sperm protamine P1 (62 aa).

The segment at 1-62 is disordered; it reads MARYRHSRSR…RYSRRRRRRY (62 aa).

Belongs to the protamine P1 family. Testis.

It localises to the nucleus. Its subcellular location is the chromosome. Functionally, protamines substitute for histones in the chromatin of sperm during the haploid phase of spermatogenesis. They compact sperm DNA into a highly condensed, stable and inactive complex. The polypeptide is Sperm protamine P1 (PRM1) (Notamacropus eugenii (Tammar wallaby)).